The sequence spans 184 residues: PXMP2/4 family protein 3 (184 aa).

An N-terminal signal peptide occupies residues 1–44 (MSNSKPLSLTDAVTTWYMKKLKSKPIQTKALTSATLSFISSVVA). The next 3 helical transmembrane spans lie at 58–78 (VVKF…WHII), 97–117 (IVDQ…VLAI), and 159–179 (LRVL…SILA).

The protein belongs to the peroxisomal membrane protein PXMP2/4 family.

Its subcellular location is the membrane. The chain is PXMP2/4 family protein 3 from Dictyostelium discoideum (Social amoeba).